The primary structure comprises 61 residues: Protein translocase subunit SecE (61 aa).

A helical transmembrane segment spans residues 39 to 59 (LGIILIGLIGMLIRIMGILVL).

This sequence belongs to the SecE/SEC61-gamma family. In terms of assembly, component of the Sec protein translocase complex. Heterotrimer consisting of SecY (alpha), SecG (beta) and SecE (gamma) subunits. The heterotrimers can form oligomers, although 1 heterotrimer is thought to be able to translocate proteins. Interacts with the ribosome. May interact with SecDF, and other proteins may be involved.

The protein resides in the cell membrane. Functionally, essential subunit of the Sec protein translocation channel SecYEG. Clamps together the 2 halves of SecY. May contact the channel plug during translocation. This Pyrococcus abyssi (strain GE5 / Orsay) protein is Protein translocase subunit SecE.